The primary structure comprises 520 residues: Transactivator/viroplasmin protein (520 aa).

Residues 487–520 form a disordered region; the sequence is QDASADSGPKDGPPPTRSIVEKEDVPTTSSKQVD.

The protein belongs to the caulimoviridae viroplasmin family.

Its subcellular location is the host cytoplasm. Functionally, enhances the ribosomal termination-reinitiation event leading to the translation of major open reading frames on the polycistronic viral RNAs. This Cauliflower mosaic virus (strain CM-1841) (CaMV) protein is Transactivator/viroplasmin protein.